Reading from the N-terminus, the 201-residue chain is Molybdenum cofactor guanylyltransferase (201 aa).

GTP-binding positions include 14-16 (LAG), K31, and D104. A Mg(2+)-binding site is contributed by D104.

Belongs to the MobA family. As to quaternary structure, monomer. Mg(2+) is required as a cofactor.

The protein localises to the cytoplasm. It catalyses the reaction Mo-molybdopterin + GTP + H(+) = Mo-molybdopterin guanine dinucleotide + diphosphate. Its function is as follows. Transfers a GMP moiety from GTP to Mo-molybdopterin (Mo-MPT) cofactor (Moco or molybdenum cofactor) to form Mo-molybdopterin guanine dinucleotide (Mo-MGD) cofactor. The sequence is that of Molybdenum cofactor guanylyltransferase from Helicobacter pylori (strain ATCC 700392 / 26695) (Campylobacter pylori).